Reading from the N-terminus, the 265-residue chain is ClpXP adapter protein SpxH (265 aa).

This sequence belongs to the SpxH family. In terms of assembly, interacts with Spx.

The protein localises to the cytoplasm. Functionally, adapter protein required for efficient degradation of Spx by ClpXP under non-stress conditions. Interaction with Spx stabilizes Spx and exposes the C-terminus of Spx for recognition and proteolysis by ClpXP. This Staphylococcus haemolyticus (strain JCSC1435) protein is ClpXP adapter protein SpxH.